Reading from the N-terminus, the 794-residue chain is Zinc finger protein 148 (794 aa).

K6 participates in a covalent cross-link: Glycyl lysine isopeptide (Lys-Gly) (interchain with G-Cter in SUMO2). S51 carries the phosphoserine modification. Residues K88, K115, and K132 each participate in a glycyl lysine isopeptide (Lys-Gly) (interchain with G-Cter in SUMO2) cross-link. The C2H2-type 1 zinc finger occupies H171–H193. At T194 the chain carries Phosphothreonine. 2 C2H2-type zinc fingers span residues F199–H221 and F227–H249. S250 is subject to Phosphoserine. Residues Y255–H278 form a C2H2-type 4 zinc finger. Residue K291 forms a Glycyl lysine isopeptide (Lys-Gly) (interchain with G-Cter in SUMO2) linkage. Positions E298–L346 are disordered. Phosphoserine is present on residues S301 and S306. K308 participates in a covalent cross-link: Glycyl lysine isopeptide (Lys-Gly) (interchain with G-Cter in SUMO2). Basic and acidic residues predominate over residues E321–D344. K356 is covalently cross-linked (Glycyl lysine isopeptide (Lys-Gly) (interchain with G-Cter in SUMO1); alternate). K356 participates in a covalent cross-link: Glycyl lysine isopeptide (Lys-Gly) (interchain with G-Cter in SUMO2); alternate. A Glycyl lysine isopeptide (Lys-Gly) (interchain with G-Cter in SUMO2) cross-link involves residue K402. S412 carries the post-translational modification Phosphoserine. Glycyl lysine isopeptide (Lys-Gly) (interchain with G-Cter in SUMO2) cross-links involve residues K421 and K424. Residues N574–G588 are compositionally biased toward polar residues. Positions N574–S596 are disordered. The residue at position 607 (K607) is an N6-acetyllysine. 2 positions are modified to phosphoserine: S665 and S784.

Belongs to the krueppel C2H2-type zinc-finger protein family. As to quaternary structure, interacts with HNRNPDL. Interacts with the 5FMC complex; the interaction requires association with CHTOP. Interacts with CAVIN1. In terms of processing, sumoylated with SUMO2. Desumoylated by SENP3, resulting in the stimulation of transcription of its target genes. As to expression, expressed in heart, lung, kidney, skeletal muscle, liver, brain and spleen.

Its subcellular location is the nucleus. Involved in transcriptional regulation. Represses the transcription of a number of genes including gastrin, stromelysin and enolase. Binds to the G-rich box in the enhancer region of these genes. In Rattus norvegicus (Rat), this protein is Zinc finger protein 148 (Znf148).